The sequence spans 400 residues: Acetate kinase (400 aa).

A Mg(2+)-binding site is contributed by Asn-7. Lys-14 is a binding site for ATP. Residue Arg-92 participates in substrate binding. The active-site Proton donor/acceptor is the Asp-149. Residues 209–213, 283–285, and 331–335 contribute to the ATP site; these read HLGNG, DAR, and GMGEN. Residue Glu-385 participates in Mg(2+) binding.

Belongs to the acetokinase family. As to quaternary structure, homodimer. Mg(2+) serves as cofactor. Requires Mn(2+) as cofactor.

It is found in the cytoplasm. The enzyme catalyses acetate + ATP = acetyl phosphate + ADP. It participates in metabolic intermediate biosynthesis; acetyl-CoA biosynthesis; acetyl-CoA from acetate: step 1/2. Catalyzes the formation of acetyl phosphate from acetate and ATP. Can also catalyze the reverse reaction. This chain is Acetate kinase, found in Helicobacter acinonychis (strain Sheeba).